A 245-amino-acid polypeptide reads, in one-letter code: 8-amino-3,8-dideoxy-manno-octulosonate cytidylyltransferase (245 aa).

Belongs to the KdsB family.

It is found in the cytoplasm. It carries out the reaction 8-amino-3,8-dideoxy-alpha-D-manno-octulosonate + CTP = CMP-8-amino-3,8-dideoxy-alpha-D-manno-oct-2-ulosonate + diphosphate. The protein operates within bacterial outer membrane biogenesis; lipopolysaccharide biosynthesis. Activates KDO8N (a required 8-carbon sugar) for incorporation into bacterial lipopolysaccharide in the Shewanella genus. The polypeptide is 8-amino-3,8-dideoxy-manno-octulosonate cytidylyltransferase (Shewanella sp. (strain MR-7)).